A 248-amino-acid polypeptide reads, in one-letter code: Probable transcriptional regulatory protein FTN_1028 (248 aa).

Belongs to the TACO1 family.

The protein resides in the cytoplasm. The polypeptide is Probable transcriptional regulatory protein FTN_1028 (Francisella tularensis subsp. novicida (strain U112)).